The sequence spans 154 residues: Transcriptional repressor NrdR (154 aa).

A zinc finger lies at 3-34 (CPFCGANDTKVIDSRLVAEGEQVRRRRECVAC). The 91-residue stretch at 49–139 (PRLIKQDGTR…VYRRFQDLDE (91 aa)) folds into the ATP-cone domain.

This sequence belongs to the NrdR family. Requires Zn(2+) as cofactor.

Functionally, negatively regulates transcription of bacterial ribonucleotide reductase nrd genes and operons by binding to NrdR-boxes. This Pseudomonas entomophila (strain L48) protein is Transcriptional repressor NrdR.